We begin with the raw amino-acid sequence, 432 residues long: Septin-14 (432 aa).

One can recognise a Septin-type G domain in the interval 49–315 (QGFTFNILCV…ECYRYQKLQK (267 aa)). Residues 59–66 (GETGIGKS) are G1 motif. GTP-binding positions include 59–66 (GETGIGKS), glycine 114, 195–203 (KADTISKND), glycine 249, and arginine 264. The interval 111 to 114 (ETVG) is G3 motif. Residues 194–197 (AKAD) are G4 motif. The stretch at 332–412 (EIFEAKRQEF…IIDFYKMKAA (81 aa)) forms a coiled coil. The required for interaction with SEPTIN4. Required for migration of cortical neurons during corticogenesis stretch occupies residues 369–432 (EAEKELQDKF…DTKKDKHRKK (64 aa)).

It belongs to the TRAFAC class TrmE-Era-EngA-EngB-Septin-like GTPase superfamily. Septin GTPase family. In terms of assembly, septins polymerize into heterooligomeric protein complexes that form filaments, and can associate with cellular membranes, actin filaments and microtubules. GTPase activity is required for filament formation. Interacts with ACTN4. Interacts with SEPTIN9. Interacts (via C-terminus) with SEPTIN4. As to expression, testis-specific (at protein level).

The protein localises to the cytoplasm. Its subcellular location is the cytoskeleton. The protein resides in the cell projection. It is found in the axon. It localises to the dendrite. The protein localises to the perikaryon. Its subcellular location is the perinuclear region. The protein resides in the cytoplasmic vesicle. It is found in the secretory vesicle. It localises to the acrosome. Functionally, filament-forming cytoskeletal GTPase. Involved in the migration of cortical neurons and the formation of neuron leading processes during embryonic development. Plays a role in sperm head formation during spermiogenesis, potentially via facilitating localization of ACTN4 to cell filaments. The chain is Septin-14 from Homo sapiens (Human).